Here is a 346-residue protein sequence, read N- to C-terminus: Ferredoxin--NADP reductase 1 (346 aa).

Residues glutamate 37, lysine 45, tyrosine 49, isoleucine 89, proline 124, aspartate 287, and serine 328 each contribute to the FAD site.

This sequence belongs to the ferredoxin--NADP reductase type 2 family. Homodimer. The cofactor is FAD.

The enzyme catalyses 2 reduced [2Fe-2S]-[ferredoxin] + NADP(+) + H(+) = 2 oxidized [2Fe-2S]-[ferredoxin] + NADPH. This is Ferredoxin--NADP reductase 1 from Bacillus pumilus (strain SAFR-032).